The sequence spans 271 residues: Probable esterase D14L (271 aa).

Catalysis depends on serine 96, which acts as the Nucleophile. Catalysis depends on residues aspartate 218 and histidine 247.

The protein belongs to the AB hydrolase superfamily. Component of an intracellular receptor complex involved in the detection of the smoke compound karrikin. In terms of tissue distribution, expressed constitutively in all organs (e.g. roots, stems, leaves, panicles and embryos).

The protein localises to the nucleus. The protein resides in the cytoplasm. In terms of biological role, may be involved in strigolactone signaling pathway. Essential for plant responses to karrikins, a class of butenolide compounds, structurally similar to strigolactones, released from burning vegetation that stimulate seed germination and enhance seedling photomorphogenesis. Mediates a specific perception of karrikin. Required for the establishment of symbiosis with the arbuscular mycorrhizal fungi (AMF) Rhizophagus irregularis and Gigaspora rosea. Karrikin binding induces a conformational change. This Oryza sativa subsp. japonica (Rice) protein is Probable esterase D14L (D14L).